The primary structure comprises 239 residues: MSLLWQARFFTTVNHLRDLPNTQVPEIAFAGRSNAGKSTAINILSNQKKLCFASKTPGRTQHINYFSIGGAHVGQHRKDETKVEEIRAMLVDLPGYGYAEVSGSAKHHWQALLGDYVQRREQLAALVLIVDSRRPFTDLDIQMLEWFAPTGKPIHCILTKSDKLNRNESTNALRTANTLLASYVDEYGQPFPFTAQLFSALKRTGIDEANDKILELLGLNDEVSEESDSKTAGDAEKAE.

Residues 23 to 219 (QVPEIAFAGR…NDKILELLGL (197 aa)) form the EngB-type G domain. Residues 31-38 (GRSNAGKS), 58-62 (GRTQH), 92-95 (DLPG), 159-162 (TKSD), and 193-200 (FTAQLFSA) each bind GTP. S38 and T60 together coordinate Mg(2+).

This sequence belongs to the TRAFAC class TrmE-Era-EngA-EngB-Septin-like GTPase superfamily. EngB GTPase family. It depends on Mg(2+) as a cofactor.

In terms of biological role, necessary for normal cell division and for the maintenance of normal septation. The polypeptide is Probable GTP-binding protein EngB (Herminiimonas arsenicoxydans).